A 342-amino-acid chain; its full sequence is Cystein proteinase inhibitor protein salarin (342 aa).

A signal peptide spans 1–19; it reads MKSLVLLLLVAVTVSSVVS. Residue Asn153 is glycosylated (N-linked (GlcNAc) asparagine). A glycan (O-linked (GlcNAc) threonine) is linked at Thr184.

N-glycosylated, with sialylated biantennary complex-type glycans. Post-translationally, O-glycosylated, with sialylated oligosaccharides.

It localises to the cytoplasm. The protein localises to the vacuole. Inhibits papain and ficin (cysteine proteinases) but not trypsin (a serine proteinase). This is Cystein proteinase inhibitor protein salarin (salarin) from Salvelinus alpinus (Arctic char).